The primary structure comprises 137 residues: Small ribosomal subunit protein uS12 (137 aa).

D89 carries the 3-methylthioaspartic acid modification. The interval 105–137 (AGVAGRTQRRSKYGAKRPKAGQAAAPAKGKGKK) is disordered. Positions 111–123 (TQRRSKYGAKRPK) are enriched in basic residues. Positions 124–137 (AGQAAAPAKGKGKK) are enriched in low complexity.

This sequence belongs to the universal ribosomal protein uS12 family. Part of the 30S ribosomal subunit. Contacts proteins S8 and S17. May interact with IF1 in the 30S initiation complex.

In terms of biological role, with S4 and S5 plays an important role in translational accuracy. Interacts with and stabilizes bases of the 16S rRNA that are involved in tRNA selection in the A site and with the mRNA backbone. Located at the interface of the 30S and 50S subunits, it traverses the body of the 30S subunit contacting proteins on the other side and probably holding the rRNA structure together. The combined cluster of proteins S8, S12 and S17 appears to hold together the shoulder and platform of the 30S subunit. The sequence is that of Small ribosomal subunit protein uS12 from Phocaeicola vulgatus (strain ATCC 8482 / DSM 1447 / JCM 5826 / CCUG 4940 / NBRC 14291 / NCTC 11154) (Bacteroides vulgatus).